The primary structure comprises 314 residues: Olfactory receptor 5P68 (314 aa).

The Extracellular segment spans residues Met-1–Val-28. An N-linked (GlcNAc...) asparagine glycan is attached at Asn-8. A helical transmembrane segment spans residues Ile-29–Ile-49. Residues Leu-50–Gln-57 are Cytoplasmic-facing. A helical membrane pass occupies residues Leu-58–Ser-78. Residues Ser-79–Ile-102 are Extracellular-facing. Cys-100 and Cys-192 are disulfide-bonded. The chain crosses the membrane as a helical span at residues Gln-103 to Tyr-123. The Cytoplasmic portion of the chain corresponds to Asp-124 to Ser-136. Residues Thr-137 to Leu-157 traverse the membrane as a helical segment. Over Asn-158 to Glu-199 the chain is Extracellular. A helical transmembrane segment spans residues Val-200 to Ser-220. The Cytoplasmic portion of the chain corresponds to Tyr-221 to Ala-240. A helical membrane pass occupies residues Phe-241–Ile-261. Over Tyr-262 to Asn-274 the chain is Extracellular. The helical transmembrane segment at Lys-275–Leu-295 threads the bilayer. Residues Arg-296–Ser-314 lie on the Cytoplasmic side of the membrane.

The protein belongs to the G-protein coupled receptor 1 family.

The protein resides in the cell membrane. Its function is as follows. Potential odorant receptor. This Mus musculus (Mouse) protein is Olfactory receptor 5P68.